A 294-amino-acid chain; its full sequence is Shikimate dehydrogenase (NADP(+)) (294 aa).

Shikimate contacts are provided by residues 23 to 25 (SRS) and Thr70. The active-site Proton acceptor is Lys74. Residues Asn95 and Asp110 each coordinate shikimate. NADP(+) is bound by residues 135 to 139 (GAGGA), 159 to 164 (NRTASR), and Met232. Tyr234 contacts shikimate. Gly255 is an NADP(+) binding site.

The protein belongs to the shikimate dehydrogenase family. Homodimer.

It carries out the reaction shikimate + NADP(+) = 3-dehydroshikimate + NADPH + H(+). It functions in the pathway metabolic intermediate biosynthesis; chorismate biosynthesis; chorismate from D-erythrose 4-phosphate and phosphoenolpyruvate: step 4/7. Involved in the biosynthesis of the chorismate, which leads to the biosynthesis of aromatic amino acids. Catalyzes the reversible NADPH linked reduction of 3-dehydroshikimate (DHSA) to yield shikimate (SA). The chain is Shikimate dehydrogenase (NADP(+)) from Cupriavidus pinatubonensis (strain JMP 134 / LMG 1197) (Cupriavidus necator (strain JMP 134)).